The primary structure comprises 349 residues: MNFFSNNFGTPCNVEFELDNCQNRKTIEVTQDKGKTEKLFVFIGNEPVSGKVSINIKEKTKKIEHTGIRVEFVGQIELFYDRGNHYEFTSLVRELAPAGELTENKTFSYDFSNVEKQYESYNGTNVRLRYFVRLTIGRSFASNIVKEYDIWVINFVKPPESNSNIKMEVGIEDCLHIEFEYNKSKYHLKDVIIGKIYFLLVRIKIKYMEIALIKRESTGSGPNVFNESETLTKFEIMDGAPVRGESIPVRLFLSVFDLTPTYRSVHNKFSVKYFLNLALVDEDDKKYFKQQEITLWRRGVTKPGLPGSTNNNNNNNTSNTNNTNTPQQKVTESQNEVPEPENNSSDESD.

Residues 299–349 (GVTKPGLPGSTNNNNNNNTSNTNNTNTPQQKVTESQNEVPEPENNSSDESD) form a disordered region. The segment covering 308 to 325 (STNNNNNNNTSNTNNTNT) has biased composition (low complexity). The segment covering 326–343 (PQQKVTESQNEVPEPENN) has biased composition (polar residues).

Belongs to the VPS26 family. In terms of assembly, component of a retromer subcomplex consisting of vps29, vps26 and vps35.

It is found in the membrane. In terms of biological role, plays a role in vesicular protein sorting. Component of the membrane-associated retromer complex which is essential in endosome-to-Golgi retrograde transport. The vps29-vps26-vps35 subcomplex may be involved in cargo selection. This chain is Vacuolar protein sorting-associated protein 26 (vps26), found in Dictyostelium discoideum (Social amoeba).